A 485-amino-acid chain; its full sequence is Iroquois-class homeodomain protein IRX-4 (485 aa).

Residues 142 to 203 (GTRRKNATRE…NARRRLKKEN (62 aa)) constitute a DNA-binding region (homeobox; TALE-type). The tract at residues 206–313 (TWPPRNKCSD…EEEEAAERAR (108 aa)) is disordered. Over residues 221 to 232 (EEEEEEEEECSQ) the composition is skewed to acidic residues. The span at 234–253 (DAMKSEKAEEPTGKEEKELE) shows a compositional bias: basic and acidic residues. Acidic residues predominate over residues 254-269 (LSDLEDLDAAESESSE). Over residues 282-294 (HPLPGGGPPPRAA) the composition is skewed to pro residues.

This sequence belongs to the TALE/IRO homeobox family. Ventricles of the heart, developing feather buds, retina, hindbrain.

It is found in the nucleus. Regulates the chamber-specific expression of myosin isoforms by activating the expression of the ventricle myosin heavy chain-1 (Vmhc1) and suppressing the expression of the atrial myosin heavy chain-1 (Amhc1) in the ventricles. May play a critical role in establishing chamber-specific gene expression in the developing heart. This Gallus gallus (Chicken) protein is Iroquois-class homeodomain protein IRX-4 (IRX4).